The sequence spans 263 residues: Thiamine thiazole synthase (263 aa).

NAD(+)-binding positions include Ser-43, 62-63 (ER), Gly-70, Val-134, and 160-162 (HID). Fe cation contacts are provided by Asp-162 and His-177. Residues Ser-180 and Met-227 each contribute to the NAD(+) site. A glycine-binding site is contributed by Arg-237.

It belongs to the THI4 family. As to quaternary structure, homooctamer; tetramer of dimers. Fe(2+) serves as cofactor.

The catalysed reaction is hydrogen sulfide + glycine + NAD(+) = ADP-5-ethyl-4-methylthiazole-2-carboxylate + nicotinamide + 3 H2O + H(+). It functions in the pathway cofactor biosynthesis; thiamine diphosphate biosynthesis. Its function is as follows. Involved in the biosynthesis of the thiazole moiety of thiamine. Catalyzes the conversion of NAD and glycine to adenosine diphosphate 5-(2-hydroxyethyl)-4-methylthiazole-2-carboxylate (ADT), an adenylated thiazole intermediate, using free sulfide as a source of sulfur. In Methanococcus aeolicus (strain ATCC BAA-1280 / DSM 17508 / OCM 812 / Nankai-3), this protein is Thiamine thiazole synthase.